Here is a 761-residue protein sequence, read N- to C-terminus: Xaa-Pro dipeptidyl-peptidase (761 aa).

Catalysis depends on charge relay system residues Ser-347, Asp-467, and His-497.

The protein belongs to the peptidase S15 family. As to quaternary structure, homodimer.

It is found in the cytoplasm. It carries out the reaction Hydrolyzes Xaa-Pro-|- bonds to release unblocked, N-terminal dipeptides from substrates including Ala-Pro-|-p-nitroanilide and (sequentially) Tyr-Pro-|-Phe-Pro-|-Gly-Pro-|-Ile.. Its function is as follows. Removes N-terminal dipeptides sequentially from polypeptides having unsubstituted N-termini provided that the penultimate residue is proline. The chain is Xaa-Pro dipeptidyl-peptidase from Streptococcus agalactiae serotype V (strain ATCC BAA-611 / 2603 V/R).